A 301-amino-acid chain; its full sequence is Homoserine O-acetyltransferase (301 aa).

The active-site Acyl-thioester intermediate is the Cys142. Positions 163 and 192 each coordinate substrate. His235 functions as the Proton acceptor in the catalytic mechanism. Residue Glu237 is part of the active site. Arg249 is a substrate binding site.

This sequence belongs to the MetA family. Homodimer.

It is found in the cytoplasm. The catalysed reaction is L-homoserine + acetyl-CoA = O-acetyl-L-homoserine + CoA. The protein operates within amino-acid biosynthesis; L-methionine biosynthesis via de novo pathway; O-acetyl-L-homoserine from L-homoserine: step 1/1. Transfers an acetyl group from acetyl-CoA to L-homoserine, forming acetyl-L-homoserine. Utilizes a ping-pong kinetic mechanism in which the acetyl group of acetyl-CoA is initially transferred to the enzyme to form an acetyl-enzyme intermediate before subsequent transfer to homoserine to form the final product, O-acetylhomoserine. Cannot use succinyl-CoA as the acyl donor. The chain is Homoserine O-acetyltransferase from Bacillus cereus (strain ATCC 10987 / NRS 248).